The chain runs to 957 residues: Glycine dehydrogenase (decarboxylating) 2 (957 aa).

At Lys707 the chain carries N6-(pyridoxal phosphate)lysine.

It belongs to the GcvP family. The glycine cleavage system is composed of four proteins: P, T, L and H. The cofactor is pyridoxal 5'-phosphate.

The catalysed reaction is N(6)-[(R)-lipoyl]-L-lysyl-[glycine-cleavage complex H protein] + glycine + H(+) = N(6)-[(R)-S(8)-aminomethyldihydrolipoyl]-L-lysyl-[glycine-cleavage complex H protein] + CO2. Its function is as follows. The glycine cleavage system catalyzes the degradation of glycine. The P protein binds the alpha-amino group of glycine through its pyridoxal phosphate cofactor; CO(2) is released and the remaining methylamine moiety is then transferred to the lipoamide cofactor of the H protein. This Pseudomonas fluorescens (strain ATCC BAA-477 / NRRL B-23932 / Pf-5) protein is Glycine dehydrogenase (decarboxylating) 2.